A 207-amino-acid chain; its full sequence is MKAIIQRVTRASVTVGEEQISSIGRGLCVLLGISVEDTQKDVDYMVRKILNLRVFEDENGRAWSRSVMDGELEVLCVSQFTLQCLLKGNKPDYHAAMPAELAQPFYNNMLEQLRETYKPELIKDGQFGAKMQVLIQNDGPVTIQLESPPAPTDPKLLSKQEKQQQRKEKTRSKGPSDSSREKAAQRSKVDPSASSGAEGDVSSEREP.

Positions 139 to 140 (GP) match the Gly-cisPro motif, important for rejection of L-amino acids motif. A disordered region spans residues 142-207 (TIQLESPPAP…EGDVSSEREP (66 aa)). Composition is skewed to basic and acidic residues over residues 156-167 (LLSKQEKQQQRK) and 178-189 (SSREKAAQRSKV).

This sequence belongs to the DTD family. Homodimer.

It is found in the cytoplasm. The catalysed reaction is a D-aminoacyl-tRNA + H2O = a tRNA + a D-alpha-amino acid + H(+). The enzyme catalyses glycyl-tRNA(Ala) + H2O = tRNA(Ala) + glycine + H(+). Its function is as follows. D-aminoacyl-tRNA deacylase, with no observable activity on tRNAs charged with their cognate L-amino acid. Hydrolyzes correctly charged, achiral, glycyl-tRNA(Gly). Deacylates mischarged D.melanogaster and E.coli glycyl-tRNA(Ala), protecting cells against glycine mischarging by AlaRS. Acts via tRNA-based rather than protein-based catalysis; rejects L-amino acids rather than detecting D-amino acids in the active site. By recycling D-aminoacyl-tRNA to D-amino acids and free tRNA molecules, this enzyme counteracts the toxicity associated with the formation of D-aminoacyl-tRNA entities in vivo and helps enforce protein L-homochirality. This chain is D-aminoacyl-tRNA deacylase 1, found in Danio rerio (Zebrafish).